The following is a 699-amino-acid chain: tRNA(Met) cytidine acetyltransferase TmcA (699 aa).

ATP-binding positions include Gln178, 200–209, and Arg322; that span reads GRGKSTLAGM. Residues 408-547 form the N-acetyltransferase domain; the sequence is MHIASAQVAG…SGCYSAMAIL (140 aa). Residues 475–477 and 482–488 each bind acetyl-CoA; these read IAV and RRQGIGR.

It belongs to the RNA cytidine acetyltransferase family. TmcA subfamily.

The protein resides in the cytoplasm. It carries out the reaction cytidine(34) in elongator tRNA(Met) + acetyl-CoA + ATP + H2O = N(4)-acetylcytidine(34) in elongator tRNA(Met) + ADP + phosphate + CoA + H(+). Its function is as follows. Catalyzes the formation of N(4)-acetylcytidine (ac(4)C) at the wobble position of tRNA(Met), by using acetyl-CoA as an acetyl donor and ATP (or GTP). This Pectobacterium atrosepticum (strain SCRI 1043 / ATCC BAA-672) (Erwinia carotovora subsp. atroseptica) protein is tRNA(Met) cytidine acetyltransferase TmcA.